Consider the following 3424-residue polypeptide: Genome polyprotein (3424 aa).

The interval 2-15 (SKKPGKSAAKRTVN) is interaction with host EXOC1. Over 2 to 101 (SKKPGKSAAK…SVNKRKEKKK (100 aa)) the chain is Cytoplasmic. The segment at 35–70 (MLDVRGAPRLILALMAFFRFAAIKPTLGLKKRWRSV) is hydrophobic; homodimerization of capsid protein C. The propeptide at 102 to 118 (SFSTALLWITMITAVAG) is ER anchor for the capsid protein C, removed in mature form by serine protease NS3. Residues 102–122 (SFSTALLWITMITAVAGLKIS) form a helical membrane-spanning segment. The Extracellular portion of the chain corresponds to 123–244 (SHRDRPLLMV…TTKYLTKVEN (122 aa)). A glycan (N-linked (GlcNAc...) asparagine; by host) is linked at Asn133. Residues 245 to 265 (WVIRNPGYALVALATAWMLGS) form a helical membrane-spanning segment. Over 266–270 (NTPQR) the chain is Cytoplasmic. Residues 271-285 (VVFMIMMMLIAPAYS) traverse the membrane as a helical segment. At 286–738 (LNCLGISNRD…GVFGTAFRSL (453 aa)) the chain is on the extracellular side. 8 cysteine pairs are disulfide-bonded: Cys288–Cys315, Cys345–Cys401, Cys345–Cys406, Cys359–Cys390, Cys377–Cys401, Cys377–Cys406, Cys475–Cys573, and Cys590–Cys621. Residues 383-396 (DRGWGNGCGLFGKG) form a fusion peptide region. The helical transmembrane segment at 739 to 759 (FGGMSWVTQALMGALLLWLGI) threads the bilayer. Over 760–765 (SARERT) the chain is Cytoplasmic. The helical transmembrane segment at 766-786 (VSLIMLSVGGILLFLAVNVHA) threads the bilayer. Residues 787–1170 (DTGCAIDMAR…EVLRRRWTAN (384 aa)) lie on the Extracellular side of the membrane. 8 cysteine pairs are disulfide-bonded: Cys790/Cys801, Cys841/Cys929, Cys965/Cys1009, Cys1067/Cys1116, Cys1078/Cys1099, Cys1078/Cys1100, Cys1099/Cys1103, and Cys1100/Cys1103. N-linked (GlcNAc...) asparagine; by host glycans are attached at residues Asn916 and Asn993. The helical transmembrane segment at 1171-1191 (LALPTSALLMACFIFGGFTYL) threads the bilayer. The Cytoplasmic portion of the chain corresponds to 1192 to 1213 (DLFRYFILVGAAFAEANSGGDV). The chain crosses the membrane as a helical span at residues 1214 to 1234 (VHLAMIAAFNIQPVALVTTFF). Residues 1235–1276 (RKNWTNRENMILIIAAACTQMACMELKIELFHVMNSLSLAWM) are Lumenal-facing. The helical transmembrane segment at 1277-1297 (ILKALTTGTTSTLAMPFLAAL) threads the bilayer. Over 1298 to 1302 (SPPMN) the chain is Cytoplasmic. The chain crosses the membrane as a helical span at residues 1303-1323 (WLGLDVVRCLLIMAGVAALIS). At 1324 to 1333 (ERRESLAKKK) the chain is on the lumenal side. The chain crosses the membrane as a helical span at residues 1334-1354 (GALLISAALALTGAFSPLVLQ). Residues 1355–1367 (GALMFTQSLGKRG) are Cytoplasmic-facing. The helical transmembrane segment at 1368–1388 (WPASEVLTAVGMTFALAGSVA) threads the bilayer. At 1389-1391 (RLD) the chain is on the lumenal side. A helical membrane pass occupies residues 1392 to 1412 (GGTMAIPLATMAILAVAYVLS). At 1413–1469 (GKSTDMWLERCADISWINEAEITGTSPRLDVELDSNGDFKMINDPGVPMWMWTCRMG) the chain is on the cytoplasmic side. The segment at 1420 to 1459 (LERCADISWINEAEITGTSPRLDVELDSNGDFKMINDPGV) is interacts with and activates NS3 protease. Residues 1470–1490 (LMAMAAYNPVLIPVSMAGYWM) constitute an intramembrane region (helical). Residues 1491–2167 (TVKIHKRGGV…ALEELPDTVE (677 aa)) lie on the Cytoplasmic side of the membrane. The Peptidase S7 domain occupies 1498-1675 (GGVMWDVPAP…ERQEEETPEA (178 aa)). Residues His1548, Asp1572, and Ser1632 each act as charge relay system; for serine protease NS3 activity in the active site. Residues 1678–1834 (PDMLKKRRLT…DSNAPIIDQE (157 aa)) form the Helicase ATP-binding domain. Residues 1682-1685 (KKRR) form an important for RNA-binding region. 1691–1698 (LHPGAGKT) is a binding site for ATP. The DEAH box motif lies at 1782 to 1785 (DEAH). Residues 1845 to 2009 (GFEWITEYTG…GLVAQLYGPE (165 aa)) form the Helicase C-terminal domain. Position 1886 is an N6-acetyllysine; by host (Lys1886). Positions 1944–1969 (APITPASAAQRRGRIGRDPTQSGDEY) are disordered. Residues 2160–2164 (EELPD) form a regulates the ATPase activity of NS3 helicase region. A helical transmembrane segment spans residues 2168–2188 (TILLMTMMCVASLGMFTLMVH). Residues 2189–2190 (RR) are Lumenal-facing. The helical intramembrane region spans 2191–2211 (GLGKTGLGTLVLATVTVLLWI). Residues 2212 to 2213 (SD) lie on the Lumenal side of the membrane. A helical transmembrane segment spans residues 2214–2234 (VPAPKIAGVLLIAFLLMIVLI). Topologically, residues 2235–2249 (PEPEKQRSQTDNHLA) are cytoplasmic. The helical transmembrane segment at 2250 to 2264 (IFLVCVLLLIGAVSA) threads the bilayer. At 2265 to 2299 (NEMGWLETTKKDIGKLFRSSGDTQEQSTWQSWAPE) the chain is on the lumenal side. Residues 2300–2320 (VRAATAWAGYAGLTVFLTPLF) constitute an intramembrane region (helical). The Lumenal portion of the chain corresponds to 2321–2342 (RHLITTQYVSFSLTAITAQASA). Residues 2343-2363 (LFGLSAGYPFVGIDLAVGFLL) traverse the membrane as a helical segment. Topologically, residues 2364–2371 (LGCYGQYN) are cytoplasmic. A helical membrane pass occupies residues 2372–2392 (LPTAVATGLLLLAHYGYMIPG). Residues 2393–2439 (WQAEAMRAAQKRTAAGVMKNAVVDGIVATDIPEVDTATPITEKKLGQ) lie on the Lumenal side of the membrane. Residues 2440–2460 (ILLILLCGASLLVKFDTMVLV) form a helical membrane-spanning segment. At 2461 to 3424 (EAGVLTTSAM…PSPVLFTGAI (964 aa)) the chain is on the cytoplasmic side. One can recognise an mRNA cap 0-1 NS5-type MT domain in the interval 2520-2784 (GGGSAPTLGE…DVCLGSGTRA (265 aa)). Residue Ser2575 participates in S-adenosyl-L-methionine binding. At Ser2575 the chain carries Phosphoserine. Lys2580 functions as the For 2'-O-MTase activity in the catalytic mechanism. 6 residues coordinate S-adenosyl-L-methionine: Gly2605, Trp2606, Thr2623, Lys2624, Asp2650, and Val2651. The active-site For 2'-O-MTase activity is the Asp2665. An S-adenosyl-L-methionine-binding site is contributed by Ile2666. Active-site for 2'-O-MTase activity residues include Lys2700 and Glu2736. Position 2738 (Tyr2738) interacts with S-adenosyl-L-methionine. Positions 2958, 2962, 2967, and 2970 each coordinate Zn(2+). The region spanning 3048–3200 (GNMFADDTAG…KPIDDRFASA (153 aa)) is the RdRp catalytic domain. Zn(2+)-binding residues include His3235, Cys3251, and Cys3370.

This sequence in the N-terminal section; belongs to the class I-like SAM-binding methyltransferase superfamily. mRNA cap 0-1 NS5-type methyltransferase family. Homodimer. Interacts (via N-terminus) with host EXOC1 (via C-terminus); this interaction results in EXOC1 degradation through the proteasome degradation pathway. In terms of assembly, forms heterodimers with envelope protein E in the endoplasmic reticulum and Golgi. As to quaternary structure, homodimer; in the endoplasmic reticulum and Golgi. Interacts with protein prM. Interacts with non-structural protein 1. Homodimer; Homohexamer when secreted. Interacts with envelope protein E. NS1 interacts with NS4B. Interacts with host complement protein CFH; this interaction leads to the degradation of C3. In terms of assembly, interacts (via N-terminus) with serine protease NS3. As to quaternary structure, forms a heterodimer with serine protease NS3. May form homooligomers. Forms a heterodimer with NS2B. Interacts with non-structural protein 2A (via N-terminus). Interacts with NS4B. Interacts with unphosphorylated RNA-directed RNA polymerase NS5; this interaction stimulates RNA-directed RNA polymerase NS5 guanylyltransferase activity. In terms of assembly, interacts with serine protease NS3. As to quaternary structure, homodimer. Interacts with host STAT2; this interaction inhibits the phosphorylation of the latter, and, when all viral proteins are present (polyprotein), targets STAT2 for degradation. Interacts with serine protease NS3. Post-translationally, specific enzymatic cleavages in vivo yield mature proteins. Cleavages in the lumen of endoplasmic reticulum are performed by host signal peptidase, whereas cleavages in the cytoplasmic side are performed by serine protease NS3. Signal cleavage at the 2K-4B site requires a prior NS3 protease-mediated cleavage at the 4A-2K site. In terms of processing, cleaved in post-Golgi vesicles by a host furin, releasing the mature small envelope protein M, and peptide pr. This cleavage is incomplete as up to 30% of viral particles still carry uncleaved prM. N-glycosylated. Post-translationally, N-glycosylated. The excreted form is glycosylated and this is required for efficient secretion of the protein from infected cells. In terms of processing, acetylated by host KAT5. Acetylation modulates NS3 RNA-binding and unwinding activities and plays an important positive role for viral replication. Phosphorylated on serines residues. This phosphorylation may trigger NS5 nuclear localization.

Its subcellular location is the virion. The protein localises to the host nucleus. The protein resides in the host cytoplasm. It is found in the host perinuclear region. It localises to the secreted. Its subcellular location is the virion membrane. The protein localises to the host endoplasmic reticulum membrane. The catalysed reaction is Selective hydrolysis of -Xaa-Xaa-|-Yaa- bonds in which each of the Xaa can be either Arg or Lys and Yaa can be either Ser or Ala.. It carries out the reaction RNA(n) + a ribonucleoside 5'-triphosphate = RNA(n+1) + diphosphate. The enzyme catalyses a ribonucleoside 5'-triphosphate + H2O = a ribonucleoside 5'-diphosphate + phosphate + H(+). It catalyses the reaction ATP + H2O = ADP + phosphate + H(+). The catalysed reaction is a 5'-end (5'-triphosphoguanosine)-ribonucleoside in mRNA + S-adenosyl-L-methionine = a 5'-end (N(7)-methyl 5'-triphosphoguanosine)-ribonucleoside in mRNA + S-adenosyl-L-homocysteine. It carries out the reaction a 5'-end (N(7)-methyl 5'-triphosphoguanosine)-ribonucleoside in mRNA + S-adenosyl-L-methionine = a 5'-end (N(7)-methyl 5'-triphosphoguanosine)-(2'-O-methyl-ribonucleoside) in mRNA + S-adenosyl-L-homocysteine + H(+). Plays a role in virus budding by binding to the cell membrane and gathering the viral RNA into a nucleocapsid that forms the core of a mature virus particle. During virus entry, may induce genome penetration into the host cytoplasm after hemifusion induced by the surface proteins. Can migrate to the cell nucleus where it modulates host functions. Overcomes the anti-viral effects of host EXOC1 by sequestering and degrading the latter through the proteasome degradation pathway. Functionally, inhibits RNA silencing by interfering with host Dicer. In terms of biological role, prevents premature fusion activity of envelope proteins in trans-Golgi by binding to envelope protein E at pH6.0. After virion release in extracellular space, gets dissociated from E dimers. Its function is as follows. Acts as a chaperone for envelope protein E during intracellular virion assembly by masking and inactivating envelope protein E fusion peptide. prM is the only viral peptide matured by host furin in the trans-Golgi network probably to avoid catastrophic activation of the viral fusion activity in acidic Golgi compartment prior to virion release. prM-E cleavage is inefficient, and many virions are only partially matured. These uncleaved prM would play a role in immune evasion. May play a role in virus budding. Exerts cytotoxic effects by activating a mitochondrial apoptotic pathway through M ectodomain. May display a viroporin activity. Functionally, binds to host cell surface receptor and mediates fusion between viral and cellular membranes. Envelope protein is synthesized in the endoplasmic reticulum in the form of heterodimer with protein prM. They play a role in virion budding in the ER, and the newly formed immature particle is covered with 60 spikes composed of heterodimer between precursor prM and envelope protein E. The virion is transported to the Golgi apparatus where the low pH causes dissociation of PrM-E heterodimers and formation of E homodimers. prM-E cleavage is inefficient, and many virions are only partially matured. These uncleaved prM would play a role in immune evasion. In terms of biological role, involved in immune evasion, pathogenesis and viral replication. Once cleaved off the polyprotein, is targeted to three destinations: the viral replication cycle, the plasma membrane and the extracellular compartment. Essential for viral replication. Required for formation of the replication complex and recruitment of other non-structural proteins to the ER-derived membrane structures. Excreted as a hexameric lipoparticle that plays a role against host immune response. Antagonizing the complement function. Binds to the host macrophages and dendritic cells. Inhibits signal transduction originating from Toll-like receptor 3 (TLR3). Its function is as follows. Component of the viral RNA replication complex that functions in virion assembly and antagonizes the host alpha/beta interferon antiviral response. Required cofactor for the serine protease function of NS3. May have membrane-destabilizing activity and form viroporins. Functionally, displays three enzymatic activities: serine protease, NTPase and RNA helicase. NS3 serine protease, in association with NS2B, performs its autocleavage and cleaves the polyprotein at dibasic sites in the cytoplasm: C-prM, NS2A-NS2B, NS2B-NS3, NS3-NS4A, NS4A-2K and NS4B-NS5. NS3 RNA helicase binds RNA and unwinds dsRNA in the 3' to 5' direction. In terms of biological role, regulates the ATPase activity of the NS3 helicase activity. NS4A allows NS3 helicase to conserve energy during unwinding. Its function is as follows. Functions as a signal peptide for NS4B and is required for the interferon antagonism activity of the latter. Induces the formation of ER-derived membrane vesicles where the viral replication takes place. Inhibits interferon (IFN)-induced host STAT1 phosphorylation and nuclear translocation, thereby preventing the establishment of cellular antiviral state by blocking the IFN-alpha/beta pathway. Inhibits STAT2 translocation in the nucleus after IFN-alpha treatment. Functionally, replicates the viral (+) and (-) RNA genome, and performs the capping of genomes in the cytoplasm. NS5 methylates viral RNA cap at guanine N-7 and ribose 2'-O positions. Besides its role in RNA genome replication, also prevents the establishment of cellular antiviral state by blocking the interferon-alpha/beta (IFN-alpha/beta) signaling pathway. Inhibits host TYK2 and STAT2 phosphorylation, thereby preventing activation of JAK-STAT signaling pathway. This chain is Genome polyprotein, found in Aedes sp. (Human).